We begin with the raw amino-acid sequence, 236 residues long: Ribosome-inactivating protein saporin-3 (236 aa).

The active site involves Glu148.

Belongs to the ribosome-inactivating protein family. Type 1 RIP subfamily.

The catalysed reaction is Endohydrolysis of the N-glycosidic bond at one specific adenosine on the 28S rRNA.. Functionally, ribosome-inactivating protein of type 1, inhibits protein synthesis in animal cells. Useful as immunotoxin for pharmacological applications. This is Ribosome-inactivating protein saporin-3 (SAP3) from Saponaria officinalis (Common soapwort).